The chain runs to 1341 residues: DNA-directed RNA polymerase subunit beta (1341 aa).

It belongs to the RNA polymerase beta chain family. In terms of assembly, the RNAP catalytic core consists of 2 alpha, 1 beta, 1 beta' and 1 omega subunit. When a sigma factor is associated with the core the holoenzyme is formed, which can initiate transcription.

The catalysed reaction is RNA(n) + a ribonucleoside 5'-triphosphate = RNA(n+1) + diphosphate. In terms of biological role, DNA-dependent RNA polymerase catalyzes the transcription of DNA into RNA using the four ribonucleoside triphosphates as substrates. The polypeptide is DNA-directed RNA polymerase subunit beta (Blochmanniella pennsylvanica (strain BPEN)).